The primary structure comprises 878 residues: Leucine--tRNA ligase (878 aa).

The short motif at P43 to H53 is the 'HIGH' region element. The 'KMSKS' region motif lies at K630–S634. K633 lines the ATP pocket.

This sequence belongs to the class-I aminoacyl-tRNA synthetase family.

The protein localises to the cytoplasm. The enzyme catalyses tRNA(Leu) + L-leucine + ATP = L-leucyl-tRNA(Leu) + AMP + diphosphate. The sequence is that of Leucine--tRNA ligase from Rhodopseudomonas palustris (strain BisB5).